The primary structure comprises 267 residues: Oxidoreductase ordB (267 aa).

The protein belongs to the avfA family.

Its pathway is mycotoxin biosynthesis. In terms of biological role, oxidoreductase; part of the fragmented gene cluster that mediates the biosynthesis of dothistromin (DOTH), a polyketide toxin very similar in structure to the aflatoxin precursor, versicolorin B. The first step of the pathway is the conversion of acetate to norsolorinic acid (NOR) and requires the fatty acid synthase subunits hexA and hexB, as well as the polyketide synthase pksA. PksA combines a hexanoyl starter unit and 7 malonyl-CoA extender units to synthesize the precursor NOR. The hexanoyl starter unit is provided to the acyl-carrier protein (ACP) domain by the fungal fatty acid synthase hexA/hexB. The second step is the conversion of NOR to averantin (AVN) and requires the norsolorinic acid ketoreductase nor1, which catalyzes the dehydration of norsolorinic acid to form (1'S)-averantin. The cytochrome P450 monooxygenase avnA then catalyzes the hydroxylation of AVN to 5'hydroxyaverantin (HAVN). The next step is performed by adhA that transforms HAVN to averufin (AVF). Averufin might then be converted to hydroxyversicolorone by cypX and avfA. Hydroxyversicolorone is further converted versiconal hemiacetal acetate (VHA) by moxY. VHA is then the substrate for the versiconal hemiacetal acetate esterase est1 to yield versiconal (VAL). Versicolorin B synthase vbsA then converts VAL to versicolorin B (VERB) by closing the bisfuran ring. Then, the activity of the versicolorin B desaturase verB leads to versicolorin A (VERA). DotB, a predicted chloroperoxidase, may perform epoxidation of the A-ring of VERA. Alternatively, a cytochrome P450, such as cypX or avnA could catalyze this step. It is also possible that another, uncharacterized, cytochrome P450 enzyme is responsible for this step. Opening of the epoxide could potentially be achieved by the epoxide hydrolase epoA. However, epoA seems not to be required for DOTH biosynthesis, but other epoxide hydrolases may have the ability to complement this hydrolysis. Alternatively, opening of the epoxide ring could be achieved non-enzymatically. The next step is the deoxygenation of ring A to yield the 5,8-dihydroxyanthraquinone which is most likely catalyzed by the NADPH dehydrogenase encoded by ver1. The last stages of DOTH biosynthesis are proposed to involve hydroxylation of the bisfuran. OrdB and norB might have oxidative roles here. An alternative possibility is that cytochrome P450 monoogenases such as avnA and cypX might perform these steps in addition to previously proposed steps. The polypeptide is Oxidoreductase ordB (Dothistroma septosporum (strain NZE10 / CBS 128990) (Red band needle blight fungus)).